A 305-amino-acid polypeptide reads, in one-letter code: N-acetylneuraminate lyase 2 (305 aa).

Aceneuramate-binding residues include S47 and T48. Y137 functions as the Proton donor in the catalytic mechanism. The Schiff-base intermediate with substrate role is filled by K165. 5 residues coordinate aceneuramate: T167, G189, D191, E192, and S208.

This sequence belongs to the DapA family. NanA subfamily. Homotetramer.

It localises to the cytoplasm. The enzyme catalyses aceneuramate = aldehydo-N-acetyl-D-mannosamine + pyruvate. Its pathway is amino-sugar metabolism; N-acetylneuraminate degradation; D-fructose 6-phosphate from N-acetylneuraminate: step 1/5. In terms of biological role, catalyzes the reversible aldol cleavage of N-acetylneuraminic acid (sialic acid; Neu5Ac) to form pyruvate and N-acetylmannosamine (ManNAc) via a Schiff base intermediate. This is N-acetylneuraminate lyase 2 from Escherichia coli O6:H1 (strain CFT073 / ATCC 700928 / UPEC).